Consider the following 429-residue polypeptide: Enolase (429 aa).

Gln163 contributes to the (2R)-2-phosphoglycerate binding site. The active-site Proton donor is the Glu205. Mg(2+) contacts are provided by Asp242, Glu286, and Asp313. Residues Lys338, Arg367, Ser368, and Lys389 each contribute to the (2R)-2-phosphoglycerate site. The active-site Proton acceptor is the Lys338.

It belongs to the enolase family. It depends on Mg(2+) as a cofactor.

The protein localises to the cytoplasm. It localises to the secreted. Its subcellular location is the cell surface. It carries out the reaction (2R)-2-phosphoglycerate = phosphoenolpyruvate + H2O. It participates in carbohydrate degradation; glycolysis; pyruvate from D-glyceraldehyde 3-phosphate: step 4/5. Its function is as follows. Catalyzes the reversible conversion of 2-phosphoglycerate (2-PG) into phosphoenolpyruvate (PEP). It is essential for the degradation of carbohydrates via glycolysis. The chain is Enolase from Thermoanaerobacter pseudethanolicus (strain ATCC 33223 / 39E) (Clostridium thermohydrosulfuricum).